The chain runs to 260 residues: Thiazole synthase (260 aa).

Lysine 100 (schiff-base intermediate with DXP) is an active-site residue. Residues glycine 161, 187 to 188 (AG), and 209 to 210 (NT) each bind 1-deoxy-D-xylulose 5-phosphate.

This sequence belongs to the ThiG family. Homotetramer. Forms heterodimers with either ThiH or ThiS.

The protein localises to the cytoplasm. The catalysed reaction is [ThiS sulfur-carrier protein]-C-terminal-Gly-aminoethanethioate + 2-iminoacetate + 1-deoxy-D-xylulose 5-phosphate = [ThiS sulfur-carrier protein]-C-terminal Gly-Gly + 2-[(2R,5Z)-2-carboxy-4-methylthiazol-5(2H)-ylidene]ethyl phosphate + 2 H2O + H(+). The protein operates within cofactor biosynthesis; thiamine diphosphate biosynthesis. Its function is as follows. Catalyzes the rearrangement of 1-deoxy-D-xylulose 5-phosphate (DXP) to produce the thiazole phosphate moiety of thiamine. Sulfur is provided by the thiocarboxylate moiety of the carrier protein ThiS. In vitro, sulfur can be provided by H(2)S. This Sorangium cellulosum (strain So ce56) (Polyangium cellulosum (strain So ce56)) protein is Thiazole synthase.